The sequence spans 76 residues: RNA-binding protein KhpA (76 aa).

Positions serine 29–glutamate 76 constitute a KH domain.

The protein belongs to the KhpA RNA-binding protein family. Forms a complex with KhpB.

The protein resides in the cytoplasm. A probable RNA chaperone. Forms a complex with KhpB which binds to cellular RNA and controls its expression. Plays a role in peptidoglycan (PG) homeostasis and cell length regulation. This chain is RNA-binding protein KhpA, found in Listeria innocua serovar 6a (strain ATCC BAA-680 / CLIP 11262).